Reading from the N-terminus, the 82-residue chain is MDPQIASASVLAAALAIGLAAIGPGIGQGNASGQAVEGIARQPEAEGKIRGTLLLTLAFMESLTIYGLVIALVLLFANPFAG.

Transmembrane regions (helical) follow at residues 5–25 (IASA…IGPG) and 57–77 (LAFM…LLFA).

Belongs to the ATPase C chain family. As to quaternary structure, F-type ATPases have 2 components, F(1) - the catalytic core - and F(0) - the membrane proton channel. F(1) has five subunits: alpha(3), beta(3), gamma(1), delta(1), epsilon(1). F(0) has four main subunits: a(1), b(1), b'(1) and c(10-14). The alpha and beta chains form an alternating ring which encloses part of the gamma chain. F(1) is attached to F(0) by a central stalk formed by the gamma and epsilon chains, while a peripheral stalk is formed by the delta, b and b' chains.

It localises to the cellular thylakoid membrane. Functionally, f(1)F(0) ATP synthase produces ATP from ADP in the presence of a proton or sodium gradient. F-type ATPases consist of two structural domains, F(1) containing the extramembraneous catalytic core and F(0) containing the membrane proton channel, linked together by a central stalk and a peripheral stalk. During catalysis, ATP synthesis in the catalytic domain of F(1) is coupled via a rotary mechanism of the central stalk subunits to proton translocation. In terms of biological role, key component of the F(0) channel; it plays a direct role in translocation across the membrane. A homomeric c-ring of between 10-14 subunits forms the central stalk rotor element with the F(1) delta and epsilon subunits. In Cyanothece sp. (strain PCC 7425 / ATCC 29141), this protein is ATP synthase subunit c.